The chain runs to 297 residues: Homoserine kinase (297 aa).

Residue 82-92 (PLTRGLGSSAS) coordinates ATP.

The protein belongs to the GHMP kinase family. Homoserine kinase subfamily.

The protein localises to the cytoplasm. The catalysed reaction is L-homoserine + ATP = O-phospho-L-homoserine + ADP + H(+). Its pathway is amino-acid biosynthesis; L-threonine biosynthesis; L-threonine from L-aspartate: step 4/5. Its function is as follows. Catalyzes the ATP-dependent phosphorylation of L-homoserine to L-homoserine phosphate. The chain is Homoserine kinase from Bacillus thuringiensis subsp. konkukian (strain 97-27).